Here is a 936-residue protein sequence, read N- to C-terminus: Protein translocase subunit SecA (936 aa).

Residues Q90, 108-112 (GEGKT), and D499 each bind ATP.

This sequence belongs to the SecA family. Monomer and homodimer. Part of the essential Sec protein translocation apparatus which comprises SecA, SecYEG and auxiliary proteins SecDF. Other proteins may also be involved.

The protein resides in the cell inner membrane. It localises to the cellular thylakoid membrane. The protein localises to the cytoplasm. It carries out the reaction ATP + H2O + cellular proteinSide 1 = ADP + phosphate + cellular proteinSide 2.. Part of the Sec protein translocase complex. Interacts with the SecYEG preprotein conducting channel. Has a central role in coupling the hydrolysis of ATP to the transfer of proteins into and across the cell membrane, serving as an ATP-driven molecular motor driving the stepwise translocation of polypeptide chains across the membrane. Functionally, probably participates in protein translocation into and across both the cytoplasmic and thylakoid membranes in cyanobacterial cells. This chain is Protein translocase subunit SecA, found in Trichodesmium erythraeum (strain IMS101).